A 232-amino-acid chain; its full sequence is Glycerol-3-phosphate acyltransferase (232 aa).

A run of 6 helical transmembrane segments spans residues 4–24, 56–76, 90–110, 124–144, 147–167, and 191–211; these read FLAIITVAYLIGSIPTSIIAG, AVTLIDIAKGTIAAVPVVAFF, IALNLIAGMSAVIGHVFTVFA, MLIGIAPISMLMVIGVFILAI, TRYVSVGSILAAIAFPLIIAI, and SLDYHLLIFGGIVAAAIIYTH.

The protein belongs to the PlsY family. As to quaternary structure, probably interacts with PlsX.

It is found in the cell inner membrane. The catalysed reaction is an acyl phosphate + sn-glycerol 3-phosphate = a 1-acyl-sn-glycero-3-phosphate + phosphate. It functions in the pathway lipid metabolism; phospholipid metabolism. Catalyzes the transfer of an acyl group from acyl-phosphate (acyl-PO(4)) to glycerol-3-phosphate (G3P) to form lysophosphatidic acid (LPA). This enzyme utilizes acyl-phosphate as fatty acyl donor, but not acyl-CoA or acyl-ACP. This chain is Glycerol-3-phosphate acyltransferase, found in Chlorobaculum parvum (strain DSM 263 / NCIMB 8327) (Chlorobium vibrioforme subsp. thiosulfatophilum).